The primary structure comprises 389 residues: Putative nickel insertion protein (389 aa).

This sequence belongs to the LarC family.

The sequence is that of Putative nickel insertion protein from Desulfotalea psychrophila (strain LSv54 / DSM 12343).